Consider the following 143-residue polypeptide: Crossover junction endodeoxyribonuclease Hjc (143 aa).

Glu-12 provides a ligand contact to Mg(2+). Ser-32 is an active-site residue. Positions 42 and 55 each coordinate Mg(2+).

The protein belongs to the Holliday junction resolvase Hjc family. As to quaternary structure, homodimer. Interacts with PCNA subunit PCNA1. Mg(2+) is required as a cofactor.

The enzyme catalyses Endonucleolytic cleavage at a junction such as a reciprocal single-stranded crossover between two homologous DNA duplexes (Holliday junction).. With respect to regulation, autoinhibits at very high concentrations, possibly because of extreme junction distortion. Inhibition (and activity at low concentrations of enzyme) is stimulated by dsDNA and Sso7d. Activity stimulated by PCNA subunit PCNA1. Functionally, a structure-specific endonuclease that resolves Holliday junction (HJ) intermediates during genetic recombination; may have some degree of sequence preference in a mobile junction. Cleaves 4-way DNA junctions introducing paired nicks in opposing strands, leaving a 5'-terminal phosphate and a 3'-terminal hydroxyl group that are subsequently ligated to produce recombinant products. Can cleave all 4 strands 3 bases 3' of the junction center. Cleaves both mobile and immobile junctions. Modifies the structure of the 4-way DNA junction, a model Holliday junction structure. The protein forms multiple complexes with 4-way DNA, suggesting more than 1 homodimer can bind to each junction. The sequence is that of Crossover junction endodeoxyribonuclease Hjc from Saccharolobus solfataricus (strain ATCC 35092 / DSM 1617 / JCM 11322 / P2) (Sulfolobus solfataricus).